Here is a 358-residue protein sequence, read N- to C-terminus: Probable tartrate dehydrogenase/decarboxylase TtuC' (358 aa).

Aspartate 222, aspartate 246, and aspartate 250 together coordinate Mn(2+).

The protein belongs to the isocitrate and isopropylmalate dehydrogenases family. Mg(2+) is required as a cofactor. Requires Mn(2+) as cofactor. The cofactor is K(+).

It localises to the cytoplasm. The enzyme catalyses tartrate + NAD(+) = 2-hydroxy-3-oxosuccinate + NADH + H(+). The catalysed reaction is (2R,3S)-tartrate + NAD(+) = 2-hydroxy-3-oxosuccinate + NADH + H(+). It carries out the reaction (2R,3R)-tartrate + NAD(+) = 2-hydroxy-3-oxosuccinate + NADH + H(+). It catalyses the reaction (2R,3R)-tartrate + H(+) = (R)-glycerate + CO2. The enzyme catalyses (R)-malate + NAD(+) = pyruvate + CO2 + NADH. The protein operates within carbohydrate acid metabolism; tartrate degradation; 2-hydroxy-3-oxosuccinate from L-tartrate: step 1/1. It functions in the pathway carbohydrate acid metabolism; tartrate degradation; 2-hydroxy-3-oxosuccinate from meso-tartrate: step 1/1. It participates in carbohydrate acid metabolism; tartrate degradation; D-glycerate from L-tartrate: step 1/1. Functionally, has multiple catalytic activities. Apart from catalyzing the oxidation of (+)-tartrate to oxaloglycolate, also converts meso-tartrate to D-glycerate and catalyzes the oxidative decarboxylation of D-malate to pyruvate. This Agrobacterium vitis (Rhizobium vitis) protein is Probable tartrate dehydrogenase/decarboxylase TtuC' (ttuC').